Reading from the N-terminus, the 272-residue chain is Dermonecrotic toxin SpeSicTox-betaIB2a (272 aa).

Residue histidine 5 is part of the active site. 2 residues coordinate Mg(2+): glutamate 25 and aspartate 27. The active-site Nucleophile is histidine 41. 2 cysteine pairs are disulfide-bonded: cysteine 45–cysteine 51 and cysteine 47–cysteine 191. Aspartate 85 provides a ligand contact to Mg(2+).

The protein belongs to the arthropod phospholipase D family. Class II subfamily. It depends on Mg(2+) as a cofactor. In terms of tissue distribution, expressed by the venom gland.

The protein localises to the secreted. It catalyses the reaction an N-(acyl)-sphingosylphosphocholine = an N-(acyl)-sphingosyl-1,3-cyclic phosphate + choline. It carries out the reaction an N-(acyl)-sphingosylphosphoethanolamine = an N-(acyl)-sphingosyl-1,3-cyclic phosphate + ethanolamine. The enzyme catalyses a 1-acyl-sn-glycero-3-phosphocholine = a 1-acyl-sn-glycero-2,3-cyclic phosphate + choline. The catalysed reaction is a 1-acyl-sn-glycero-3-phosphoethanolamine = a 1-acyl-sn-glycero-2,3-cyclic phosphate + ethanolamine. Dermonecrotic toxins cleave the phosphodiester linkage between the phosphate and headgroup of certain phospholipids (sphingolipid and lysolipid substrates), forming an alcohol (often choline) and a cyclic phosphate. This toxin acts on sphingomyelin (SM). It may also act on ceramide phosphoethanolamine (CPE), lysophosphatidylcholine (LPC) and lysophosphatidylethanolamine (LPE), but not on lysophosphatidylserine (LPS), and lysophosphatidylglycerol (LPG). It acts by transphosphatidylation, releasing exclusively cyclic phosphate products as second products. Induces dermonecrosis, hemolysis, increased vascular permeability, edema, inflammatory response, and platelet aggregation. In Sicarius peruensis (Six-eyed sand spider), this protein is Dermonecrotic toxin SpeSicTox-betaIB2a.